Here is a 1584-residue protein sequence, read N- to C-terminus: Kinesin-like protein unc-104 (1584 aa).

In terms of domain architecture, Kinesin motor spans S3–I347. An ATP-binding site is contributed by G93–S100. Residues V183–L335 are microtubule-binding. Coiled coils occupy residues E425–M445, I598–S652, and S777–E797. The interval I1366–S1416 is disordered. Polar residues predominate over residues N1376 to V1394. Residues S1395–L1409 are compositionally biased toward low complexity. Residues V1460–A1558 form the PH domain.

Belongs to the TRAFAC class myosin-kinesin ATPase superfamily. Kinesin family. Unc-104 subfamily. In terms of assembly, interacts with casy-1. In terms of tissue distribution, expressed in nerve ring, amphid commissure and ventral nerve cord (at protein level).

Its subcellular location is the cytoplasm. It localises to the cytoskeleton. It is found in the cell projection. The protein resides in the axon. Its function is as follows. Motor protein involved in microtubule-associated anterograde transport. Regulates the transport of synaptic vesicle precursors in the axon of DA motor neurons. Regulates the polarized sorting of axonal proteins. Essential for the transport of synaptic components during the synaptic remodeling of the DD motor neuron, probably downstream of cdk-5 and/or pct-1/cyy-1 complex. Required for the anterograde transport of neuropeptide-containing dense core vesicles along axons. Involved in necrotic cell death. This chain is Kinesin-like protein unc-104 (unc-104), found in Caenorhabditis elegans.